Here is a 92-residue protein sequence, read N- to C-terminus: Putative pterin-4-alpha-carbinolamine dehydratase (92 aa).

It belongs to the pterin-4-alpha-carbinolamine dehydratase family.

It catalyses the reaction (4aS,6R)-4a-hydroxy-L-erythro-5,6,7,8-tetrahydrobiopterin = (6R)-L-erythro-6,7-dihydrobiopterin + H2O. The polypeptide is Putative pterin-4-alpha-carbinolamine dehydratase (Acidobacterium capsulatum (strain ATCC 51196 / DSM 11244 / BCRC 80197 / JCM 7670 / NBRC 15755 / NCIMB 13165 / 161)).